The chain runs to 257 residues: Type III pantothenate kinase (257 aa).

6–13 (DVGNTNTV) is an ATP binding site. Substrate-binding positions include Tyr102 and 109–112 (GADR). Asp111 (proton acceptor) is an active-site residue. Asp131 contacts K(+). Residue Thr134 coordinates ATP. Residue Thr186 participates in substrate binding.

This sequence belongs to the type III pantothenate kinase family. As to quaternary structure, homodimer. Requires NH4(+) as cofactor. K(+) serves as cofactor.

Its subcellular location is the cytoplasm. The enzyme catalyses (R)-pantothenate + ATP = (R)-4'-phosphopantothenate + ADP + H(+). The protein operates within cofactor biosynthesis; coenzyme A biosynthesis; CoA from (R)-pantothenate: step 1/5. Its function is as follows. Catalyzes the phosphorylation of pantothenate (Pan), the first step in CoA biosynthesis. This chain is Type III pantothenate kinase, found in Leptospira interrogans serogroup Icterohaemorrhagiae serovar copenhageni (strain Fiocruz L1-130).